The following is a 374-amino-acid chain: Phospho-N-acetylmuramoyl-pentapeptide-transferase (374 aa).

10 consecutive transmembrane segments (helical) span residues 3 to 23 (AVIVAVGVAFLVSLFCTPIAI), 52 to 72 (MGGVVFILATVIAYVAGHLAL), 85 to 105 (PTITALVLLGLMVFSGAVGFI), 125 to 145 (LLGQILVGAVFGVIALYFPST), 170 to 190 (IPALELTKVGAVVLFIFVVMA), 201 to 221 (LDGLATGASVMVLAAYALIAF), 244 to 264 (PLEIALIAGAAAGACVGFLWW), 271 to 291 (IFMGDTGALGLGGLIAGMAMS), 294 to 314 (TILLLPIIGGLFVIITMSVVI), and 350 to 370 (FWIIAGIGVAIALGLFYSEFL).

Belongs to the glycosyltransferase 4 family. MraY subfamily. Mg(2+) serves as cofactor.

The protein localises to the cell membrane. It catalyses the reaction UDP-N-acetyl-alpha-D-muramoyl-L-alanyl-gamma-D-glutamyl-meso-2,6-diaminopimeloyl-D-alanyl-D-alanine + di-trans,octa-cis-undecaprenyl phosphate = di-trans,octa-cis-undecaprenyl diphospho-N-acetyl-alpha-D-muramoyl-L-alanyl-D-glutamyl-meso-2,6-diaminopimeloyl-D-alanyl-D-alanine + UMP. It participates in cell wall biogenesis; peptidoglycan biosynthesis. Its function is as follows. Catalyzes the initial step of the lipid cycle reactions in the biosynthesis of the cell wall peptidoglycan: transfers peptidoglycan precursor phospho-MurNAc-pentapeptide from UDP-MurNAc-pentapeptide onto the lipid carrier undecaprenyl phosphate, yielding undecaprenyl-pyrophosphoryl-MurNAc-pentapeptide, known as lipid I. This chain is Phospho-N-acetylmuramoyl-pentapeptide-transferase, found in Salinispora arenicola (strain CNS-205).